A 414-amino-acid polypeptide reads, in one-letter code: Serine/threonine transporter SstT (414 aa).

At T2–H15 the chain is on the cytoplasmic side. Residues G16–S36 traverse the membrane as a helical segment. Residues K37–L45 lie on the Periplasmic side of the membrane. The chain crosses the membrane as a helical span at residues L46 to V66. Residues M67 to P83 lie on the Cytoplasmic side of the membrane. Residues I84–F104 traverse the membrane as a helical segment. Residues A105–D142 lie on the Periplasmic side of the membrane. The helical transmembrane segment at A143–L163 threads the bilayer. Residues R164–N179 lie on the Cytoplasmic side of the membrane. Residues A180–V200 form a helical membrane-spanning segment. At S201–Q217 the chain is on the periplasmic side. A helical transmembrane segment spans residues L218–V238. Over W239–N299 the chain is Cytoplasmic. A helical membrane pass occupies residues M300–I320. The Periplasmic segment spans residues P321 to S331. Residues V332–I352 traverse the membrane as a helical segment. Residues P353 to N414 lie on the Cytoplasmic side of the membrane.

This sequence belongs to the dicarboxylate/amino acid:cation symporter (DAACS) (TC 2.A.23) family.

The protein localises to the cell inner membrane. It catalyses the reaction L-serine(in) + Na(+)(in) = L-serine(out) + Na(+)(out). The enzyme catalyses L-threonine(in) + Na(+)(in) = L-threonine(out) + Na(+)(out). Involved in the import of serine and threonine into the cell, with the concomitant import of sodium (symport system). This Shigella flexneri serotype 5b (strain 8401) protein is Serine/threonine transporter SstT.